The following is a 559-amino-acid chain: MEAALAACALPSLRILNTKPRFRCSFSNPSLPISPNSLITRKSSRFTTAVSSPPSSSAATSTNSPPEPEALFEPGSDKFDWYANWYPVMPICDLDKKVPHGKKVMGIDLVVWWDRNEKQWKVMDDTCPHRLAPLSDGRIDQWGRLQCVYHGWCFNGSGDCKLIPQAPPDGPPVHTFKQACVAVYPSTVQHEIIWFWPNSDPKYKNIIETNKPPYIPELEDPSFTKLMGNRDIPYGYDVLVENLMDPAHVPYAHYGLMRFPKPKGKYIICISNSCFNPFTNLQILLAEKIDREGGKPLEINVKKLDNKGFFSKQEWGYSNFIAPCVYRSSTDPLPEQEHEYPAPAASDKAALSKRRLSLIFICIPVSPGRSRLIWTFPRNFGVFIDKIVPRWVFHIGQNTILDSDLHLLHVEERKILERGPENWQKACFIPTKSDANVVTFRRWFNKYSEARVDWRGKFDPFLLPPTPPREQLFDRYWSHVENCSSCKKAHKYLNALEVILQIASVAMIGVMAVLKQTTMSNVARIAVLVAAVLSFAASKWLSHFIYKTFHYHDYNHAVV.

The N-terminal 55 residues, 1-55 (MEAALAACALPSLRILNTKPRFRCSFSNPSLPISPNSLITRKSSRFTTAVSSPPS), are a transit peptide targeting the chloroplast. Residues 44-70 (SRFTTAVSSPPSSSAATSTNSPPEPEA) form a disordered region. The span at 47–64 (TTAVSSPPSSSAATSTNS) shows a compositional bias: low complexity. A Rieske domain is found at 85–195 (WYPVMPICDL…STVQHEIIWF (111 aa)). Residues C127, H129, C147, and H150 each coordinate [2Fe-2S] cluster. 2 residues coordinate Fe cation: H248 and H253. Positions 483–486 (CSSC) match the Redox-active motif motif. Helical transmembrane passes span 493–513 (LNAL…VMAV) and 525–545 (IAVL…SHFI).

It depends on [2Fe-2S] cluster as a cofactor.

The protein resides in the plastid. It localises to the chloroplast inner membrane. It catalyses the reaction protochlorophyllide a + 4 reduced [2Fe-2S]-[ferredoxin] + 2 O2 + 5 H(+) = protochlorophyllide b + 4 oxidized [2Fe-2S]-[ferredoxin] + 3 H2O. Down-regulated by light. Functionally, part of a translocon most abundantly expressed in etiolated plants and involved in the protochlorophyllide-dependent import of the precursor NADPH:protochlorophyllide oxidoreductase A (pPORA). The sequence is that of Protochlorophyllide-dependent translocon component 52, chloroplastic from Arabidopsis thaliana (Mouse-ear cress).